The chain runs to 102 residues: Small ribosomal subunit protein uS10 (102 aa).

Belongs to the universal ribosomal protein uS10 family. In terms of assembly, part of the 30S ribosomal subunit.

In terms of biological role, involved in the binding of tRNA to the ribosomes. The polypeptide is Small ribosomal subunit protein uS10 (Methanosarcina mazei (strain ATCC BAA-159 / DSM 3647 / Goe1 / Go1 / JCM 11833 / OCM 88) (Methanosarcina frisia)).